We begin with the raw amino-acid sequence, 901 residues long: MLIPSKLSRPVRLDHTVVRERLLAKLSGANNFRLALVTSPAGYGKTTLVSQWAAGKNELGWYSLDEGDNQQERFASYLIAAIQQATGGHCSTSEAMAQKRQYASLTSLFAQLFIELAQWHRPLYLVIDDYHLITNPVIHDAMRFFLRHQPENFTLVVLSRNLPQLGIANLRVRDQLLEIGSQQLAFNHQEAKQFFDRRLSSPIEAAESSRMCDDVAGWATALQLIALSARQNHTSAHHSARRLAGINASHLSDYLVDEVLDNVDVSTRHFLLKSAILRSMNDALIVRVTGEENGQMRLEEIERQGLFLQRMDDTGEWFSYHPSFGSFLRQRCQWELAAELSEIHRAAAESWMEQGFPSEAIHHALAAGDAQMLRDILLNHAWGLFNHSELALLEESLKALPWESLLENPRLVLLQAWLMQSQHRYSEVNTLLARAEQEIKGVMDGTLHAEFNALRAQVAINDGNPEEAERLAKLALDELPLAWFYSRIVATSVHGEVLHCKGDLSQSLSLMQQTEQMARHHDVWHYALWSLIQQSEIQFAQGFLQAAWETQERAFQLIKEQHLEQLPMHEFLVRIRAQLLWAWARLDEAEASARSGIAVLSTFQPQQQLQCLTLLVQCSLARGDLDNARSQLNRLENLLGNGRYHCDWISNADKVRVIYWQLTGDKKSAANWLRHTPKPAFANNHFLQGQWRNIARAQILLGEFEPAEIVLEELNENARSLRLMSDLNRNLLLLNQLYWQSGRKNDAQRVLLDALQLANRTGFISHFVIEGEAMAQQLRQLIQLNTLPEMEQHRAQRILREINQHHRHKFAHFDEGFVERLLNHPDVPELIRTSPLTQREWQVLGLIYSGYSNEQIAGELAVAATTIKTHIRNLYQKLGVAHRQDAVQHAQQLLKMMGYGV.

39–46 (SPAGYGKT) provides a ligand contact to ATP. The 66-residue stretch at 829 to 894 (ELIRTSPLTQ…DAVQHAQQLL (66 aa)) folds into the HTH luxR-type domain. A DNA-binding region (H-T-H motif) is located at residues 853–872 (NEQIAGELAVAATTIKTHIR).

The protein belongs to the MalT family. Monomer in solution. Oligomerizes to an active state in the presence of the positive effectors ATP and maltotriose.

With respect to regulation, activated by ATP and maltotriose, which are both required for DNA binding. Its function is as follows. Positively regulates the transcription of the maltose regulon whose gene products are responsible for uptake and catabolism of malto-oligosaccharides. Specifically binds to the promoter region of its target genes, recognizing a short DNA motif called the MalT box. The sequence is that of HTH-type transcriptional regulator MalT from Salmonella choleraesuis (strain SC-B67).